A 497-amino-acid chain; its full sequence is 4,4'-diaponeurosporene oxygenase (497 aa).

7 to 19 (VIGGGLGGISAAI) provides a ligand contact to FAD.

Belongs to the carotenoid/retinoid oxidoreductase family. CrtP subfamily. It depends on FAD as a cofactor.

It catalyses the reaction all-trans-4,4'-diaponeurosporene + 2 AH2 + 2 O2 = 4,4'-diaponeurosporenal + 2 A + 3 H2O. The protein operates within carotenoid biosynthesis; staphyloxanthin biosynthesis; staphyloxanthin from farnesyl diphosphate: step 3/5. In terms of biological role, involved in the biosynthesis of the yellow-orange carotenoid staphyloxanthin, which plays a role in the virulence via its protective function against oxidative stress. Catalyzes the oxidation of the terminal methyl side group of 4,4'-diaponeurosporene to form 4,4'-diaponeurosporen-4-al. The chain is 4,4'-diaponeurosporene oxygenase from Staphylococcus aureus (strain bovine RF122 / ET3-1).